We begin with the raw amino-acid sequence, 900 residues long: Suppressor of activated egl-4 protein 1 (900 aa).

3 disordered regions span residues 1-75 (MPPP…HLPT), 340-380 (PVAE…SRKN), and 406-425 (WAST…ESLE). A compositionally biased stretch (polar residues) spans 53 to 75 (ASGQQHRPSIMSGQSHQNNHLPT). Composition is skewed to basic and acidic residues over residues 358 to 377 (GDMK…DGPS) and 412 to 425 (ADEK…ESLE). In terms of domain architecture, ELM2 spans 451 to 544 (PHINLGKNYQ…AAVEDLLRSD (94 aa)). The SANT domain occupies 560 to 611 (NDSVLWTPDEIYQFQDAIYQSEKDFDKVAVELPGKSVKECVQFYYTWKKDCP). A disordered region spans residues 710–729 (PTAPRAHHTPSASASKKGAQ). The C2H2-type zinc-finger motif lies at 736-758 (FHCRLCDKCFEKVKSLNAHMKSH).

In terms of assembly, may be a component of a histone deacetylase complex containing saeg-2, saeg-1 and hda-2. May interact with egl-4. Ubiquitously expressed.

It is found in the nucleus. Its function is as follows. As a likely component of a histone deacetylase complex, together with saeg-2 and hda-2, functions downstream of the cAMP-dependent kinase egl-4 to regulate the expression of genes required for egg-laying and foraging. This is Suppressor of activated egl-4 protein 1 from Caenorhabditis elegans.